We begin with the raw amino-acid sequence, 117 residues long: Putative membrane protein insertion efficiency factor (117 aa).

This sequence belongs to the UPF0161 family.

It localises to the cell inner membrane. Functionally, could be involved in insertion of integral membrane proteins into the membrane. This is Putative membrane protein insertion efficiency factor from Bartonella quintana (strain Toulouse) (Rochalimaea quintana).